The sequence spans 523 residues: uncharacterized protein (523 aa).

Residues 1 to 63 (MACVSTCLIL…NRHGIAVVKA (63 aa)) constitute a chloroplast transit peptide. The next 3 membrane-spanning stretches (helical) occupy residues 180–200 (VSFG…IIAL), 386–406 (ALVI…NTLL), and 423–443 (IYPL…IRWF).

It is found in the plastid. Its subcellular location is the chloroplast membrane. This is an uncharacterized protein from Arabidopsis thaliana (Mouse-ear cress).